The sequence spans 249 residues: MAIRTQYENSNEVGVFATLTNSYALVSLGSSCNFASVFEAELMPQIPVVQTTIGGTRVVGSVTVGNRKGLLVSSICTDTELRHLRNSLPDSVEIRRIDDRLSALGNVITCNDYVGLIHVDIDRETEEIVEDVLGIEVFRASIAGNVLIGSYCRFQNKGGLVHVKTTTDEMEELSQLLQIPLTSGTVNRGSDVIGGGLIANDWVAFCGMSTTATEIATIERIFQLSRPKEFDPSVSNSHTLRNALIDTLI.

It belongs to the eIF-6 family. In terms of assembly, monomer. Associates with the 60S ribosomal subunit.

The protein localises to the cytoplasm. The protein resides in the nucleus. It localises to the nucleolus. Its function is as follows. Binds to the 60S ribosomal subunit and prevents its association with the 40S ribosomal subunit to form the 80S initiation complex in the cytoplasm. May also be involved in ribosome biogenesis. The chain is Eukaryotic translation initiation factor 6 from Babesia bovis.